A 127-amino-acid chain; its full sequence is MRSEDRADNKSLGEQGEAIAVCYLKGRKYAIVERNFRCKCGEVDIIARDGKTIVFVEVKTRRNEACGPPQASVTPFKQRQISKAALTWLAKKMLLDAPARFDVVAILQRDHAVPEIEHIKDAFELAY.

Belongs to the UPF0102 family.

In Geotalea uraniireducens (strain Rf4) (Geobacter uraniireducens), this protein is UPF0102 protein Gura_3756.